The following is a 462-amino-acid chain: UDP-N-acetylmuramoylalanine--D-glutamate ligase (462 aa).

117–123 (GTNGKTT) is an ATP binding site.

It belongs to the MurCDEF family.

Its subcellular location is the cytoplasm. The enzyme catalyses UDP-N-acetyl-alpha-D-muramoyl-L-alanine + D-glutamate + ATP = UDP-N-acetyl-alpha-D-muramoyl-L-alanyl-D-glutamate + ADP + phosphate + H(+). Its pathway is cell wall biogenesis; peptidoglycan biosynthesis. Functionally, cell wall formation. Catalyzes the addition of glutamate to the nucleotide precursor UDP-N-acetylmuramoyl-L-alanine (UMA). This chain is UDP-N-acetylmuramoylalanine--D-glutamate ligase, found in Parasynechococcus marenigrum (strain WH8102).